A 100-amino-acid polypeptide reads, in one-letter code: UPF0213 protein YhbQ (100 aa).

Residues 2–77 form the GIY-YIG domain; sequence TPWFLYLIRT…KQLTKRQKER (76 aa).

It belongs to the UPF0213 family.

The protein is UPF0213 protein YhbQ of Escherichia coli (strain K12 / MC4100 / BW2952).